A 334-amino-acid polypeptide reads, in one-letter code: Testis-specific Y-encoded protein 1 (334 aa).

Ser4 bears the Phosphoserine mark. 2 disordered regions span residues 27 to 46 and 96 to 146; these read LEGEPSVQAPEQSPGAPAGD and NEGE…AERR. 2 stretches are compositionally biased toward basic and acidic residues: residues 96–108 and 115–128; these read NEGEEVKDQKQEG and ELEKNPEQACDSKD.

Belongs to the nucleosome assembly protein (NAP) family. Post-translationally, phosphorylated. Testis.

It is found in the cytoplasm. The protein resides in the nucleus. Functionally, may be involved in sperm differentiation and proliferation. In Rattus norvegicus (Rat), this protein is Testis-specific Y-encoded protein 1 (Tspy1).